A 510-amino-acid chain; its full sequence is ETS translocation variant 5 (510 aa).

The tract at residues 131-208 (FKPLTPPTTP…QPLQMPKMMP (78 aa)) is disordered. The span at 161-174 (GHAPAAGPVQGVGP) shows a compositional bias: low complexity. Over residues 175-185 (APAPHSLPEPG) the composition is skewed to pro residues. S248 carries the phosphoserine modification. A Glycyl lysine isopeptide (Lys-Gly) (interchain with G-Cter in SUMO2) cross-link involves residue K350. The segment at residues 368-448 (LQLWQFLVTL…AGERYVYKFV (81 aa)) is a DNA-binding region (ETS).

In terms of assembly, interacts (via C-terminal) with ZMYM5 (via N-terminal 120 amino acid region). As to expression, ubiquitous.

The protein localises to the nucleus. Its function is as follows. Binds to DNA sequences containing the consensus nucleotide core sequence 5'-GGAA.-3'. In Homo sapiens (Human), this protein is ETS translocation variant 5 (ETV5).